The primary structure comprises 152 residues: Large ribosomal subunit protein bL9 (152 aa).

It belongs to the bacterial ribosomal protein bL9 family.

In terms of biological role, binds to the 23S rRNA. In Crocosphaera subtropica (strain ATCC 51142 / BH68) (Cyanothece sp. (strain ATCC 51142)), this protein is Large ribosomal subunit protein bL9.